A 210-amino-acid polypeptide reads, in one-letter code: Thiamine-phosphate synthase (210 aa).

4-amino-2-methyl-5-(diphosphooxymethyl)pyrimidine-binding positions include 43 to 47 and N75; that span reads QLREK. Residues D76 and D95 each contribute to the Mg(2+) site. Residue S114 participates in 4-amino-2-methyl-5-(diphosphooxymethyl)pyrimidine binding. Position 140–142 (140–142) interacts with 2-[(2R,5Z)-2-carboxy-4-methylthiazol-5(2H)-ylidene]ethyl phosphate; the sequence is TST. A 4-amino-2-methyl-5-(diphosphooxymethyl)pyrimidine-binding site is contributed by K143. Residues G170 and 190–191 contribute to the 2-[(2R,5Z)-2-carboxy-4-methylthiazol-5(2H)-ylidene]ethyl phosphate site; that span reads IS.

The protein belongs to the thiamine-phosphate synthase family. The cofactor is Mg(2+).

It catalyses the reaction 2-[(2R,5Z)-2-carboxy-4-methylthiazol-5(2H)-ylidene]ethyl phosphate + 4-amino-2-methyl-5-(diphosphooxymethyl)pyrimidine + 2 H(+) = thiamine phosphate + CO2 + diphosphate. The catalysed reaction is 2-(2-carboxy-4-methylthiazol-5-yl)ethyl phosphate + 4-amino-2-methyl-5-(diphosphooxymethyl)pyrimidine + 2 H(+) = thiamine phosphate + CO2 + diphosphate. It carries out the reaction 4-methyl-5-(2-phosphooxyethyl)-thiazole + 4-amino-2-methyl-5-(diphosphooxymethyl)pyrimidine + H(+) = thiamine phosphate + diphosphate. It participates in cofactor biosynthesis; thiamine diphosphate biosynthesis; thiamine phosphate from 4-amino-2-methyl-5-diphosphomethylpyrimidine and 4-methyl-5-(2-phosphoethyl)-thiazole: step 1/1. In terms of biological role, condenses 4-methyl-5-(beta-hydroxyethyl)thiazole monophosphate (THZ-P) and 2-methyl-4-amino-5-hydroxymethyl pyrimidine pyrophosphate (HMP-PP) to form thiamine monophosphate (TMP). This chain is Thiamine-phosphate synthase, found in Clostridioides difficile (strain 630) (Peptoclostridium difficile).